The sequence spans 218 residues: Putative pre-16S rRNA nuclease (218 aa).

The protein belongs to the YqgF nuclease family.

It is found in the cytoplasm. Functionally, could be a nuclease involved in processing of the 5'-end of pre-16S rRNA. This is Putative pre-16S rRNA nuclease from Thermotoga maritima (strain ATCC 43589 / DSM 3109 / JCM 10099 / NBRC 100826 / MSB8).